The chain runs to 520 residues: Vacuolar protein sorting-associated protein 9A (520 aa).

The VPS9 domain maps to 102 to 246; that stretch reads VIADEKLFQK…ISNIDAKSIS (145 aa). 2 residues coordinate GTP: N180 and D185. 3 disordered regions span residues 267-331, 396-433, and 464-520; these read DSQT…AESI, LAPS…ETDR, and LVEG…EASE. Over residues 287-323 the composition is skewed to polar residues; it reads LQKTQSLNPKRENTLFQSKSSDSLSGTNELLNINSET. At S330 the chain carries Phosphoserine. Residues 396–407 show a composition bias toward low complexity; it reads LAPSSSPLQASS. Basic and acidic residues-rich tracts occupy residues 413 to 433 and 464 to 497; these read KESE…ETDR and LVEG…REGD.

As to quaternary structure, homodimer. The homodimer interacts with RABF2B. Interacts with RABF1 and RABF2A. In terms of tissue distribution, widely expressed.

In terms of biological role, functions as a guanine nucleotide exchange factor (GEF) for Rab small GTPases. Activates specifically RABF1, RABF2A and RABF2B proteins. Required for early stages of embryogenesis, cytokinesis, embryogenesis, and organ development. Is essential for the establishment or maintenance of the polar localization of the auxin efflux carrier PIN1. The sequence is that of Vacuolar protein sorting-associated protein 9A from Arabidopsis thaliana (Mouse-ear cress).